Reading from the N-terminus, the 829-residue chain is Ectonucleotide pyrophosphatase/phosphodiesterase C27A7.1 (829 aa).

Residues Val-54 to Leu-74 traverse the membrane as a helical; Signal-anchor for type II membrane protein segment. The Nucleophile role is filled by Thr-224. Residues Asn-296, Asn-424, Asn-514, Asn-542, Asn-582, Asn-649, Asn-733, and Asn-748 are each glycosylated (N-linked (GlcNAc...) asparagine). Cys-439 and Cys-782 are joined by a disulfide.

It belongs to the nucleotide pyrophosphatase/phosphodiesterase family.

The protein resides in the membrane. Probable phosphodiesterase. The sequence is that of Ectonucleotide pyrophosphatase/phosphodiesterase C27A7.1 from Caenorhabditis elegans.